Here is a 529-residue protein sequence, read N- to C-terminus: Glucose-6-phosphate isomerase (529 aa).

E322 serves as the catalytic Proton donor. Catalysis depends on residues H351 and K455.

This sequence belongs to the GPI family.

The protein localises to the cytoplasm. The catalysed reaction is alpha-D-glucose 6-phosphate = beta-D-fructose 6-phosphate. The protein operates within carbohydrate biosynthesis; gluconeogenesis. It participates in carbohydrate degradation; glycolysis; D-glyceraldehyde 3-phosphate and glycerone phosphate from D-glucose: step 2/4. Catalyzes the reversible isomerization of glucose-6-phosphate to fructose-6-phosphate. This Cyanothece sp. (strain PCC 7425 / ATCC 29141) protein is Glucose-6-phosphate isomerase.